Consider the following 186-residue polypeptide: Adenine phosphoribosyltransferase (186 aa).

Belongs to the purine/pyrimidine phosphoribosyltransferase family. As to quaternary structure, homodimer.

Its subcellular location is the cytoplasm. The enzyme catalyses AMP + diphosphate = 5-phospho-alpha-D-ribose 1-diphosphate + adenine. The protein operates within purine metabolism; AMP biosynthesis via salvage pathway; AMP from adenine: step 1/1. Its function is as follows. Catalyzes a salvage reaction resulting in the formation of AMP, that is energically less costly than de novo synthesis. This is Adenine phosphoribosyltransferase from Sulfurovum sp. (strain NBC37-1).